The chain runs to 334 residues: Serine/threonine-protein kinase (334 aa).

A Protein kinase domain is found at 53–333 (FEVLQPLQSG…DEILNFGMWT (281 aa)). ATP is bound by residues 59–67 (LQSGSEGRV) and Lys82. Asp167 (proton acceptor) is an active-site residue.

The protein belongs to the protein kinase superfamily. Ser/Thr protein kinase family.

It carries out the reaction L-seryl-[protein] + ATP = O-phospho-L-seryl-[protein] + ADP + H(+). The enzyme catalyses L-threonyl-[protein] + ATP = O-phospho-L-threonyl-[protein] + ADP + H(+). Functionally, able to phosphorylate in vitro the major virion phosphoprotein phosphorylated in vivo. In Sus scrofa (Pig), this protein is Serine/threonine-protein kinase (PK).